The chain runs to 366 residues: Polyprenyl transferase AOL_s00215g276 (366 aa).

Residues 1 to 22 are disordered; that stretch reads MESIIARPRTRSSAKEKTQTMS. Helical transmembrane passes span 53–73, 85–105, 137–157, 160–180, 185–205, 212–232, and 253–273; these read LHTL…CLSA, FLSV…AFCT, IIAF…TLGF, ALVC…KRVV, LVLG…VAGN, AVPM…IYAT, and HMHQ…SFTA. A glycan (N-linked (GlcNAc...) asparagine) is linked at Asn-277. 2 helical membrane-spanning segments follow: residues 281-301 and 312-332; these read LFWS…LLSL and VFLM…IELW. A glycan (N-linked (GlcNAc...) asparagine) is linked at Asn-352.

It belongs to the UbiA prenyltransferase family. The cofactor is Mg(2+).

The protein resides in the membrane. It participates in secondary metabolite biosynthesis; terpenoid biosynthesis. Its function is as follows. Polyprenyl transferase; part of the gene cluster that mediates the biosynthesis of sesquiterpenyl epoxy-cyclohexenoids (SECs) such as anthrobotrisins and arthrosporols, metabolites that possess a novel hybrid carbon skeleton consisting of a polyketide-derived epoxycyclohexenol combined with a terpenoid-derived monocyclic sesquiterpenol substructure (PKS-PTS hybrid). The SEC pathway plays an important role for fungal soil colonization via decreasing fungal nematode-capturing ability. Within the pathway, the polyprenyl transferase catalyzes the farnesylation of toluquinol to yield farnesyl hydroquinone, the first hybrid precursor for biosynthesis of SECs, and farnesyl quinone (34) might be the key precursor for the epoxy ring formation. The pathway begins with the biosynthesis of 6-methylsalicylic acid (6-MSA), the first precursor of the polyketide-derived epoxycyclohexenol in arthrosporols, by the polyketide synthase (PKS) AOL_s00215g283 via condensation of 1 acetate and 3 malonate units. The 6-methylsalicylic acid decarboxylase AOL_s00215g281 then catalyzes the decarboxylation of 6-methylsalicylic acid to yield m-cresol. The cytochrome P450 monooxygenase AOL_s00215g282 further oxidizes m-cresol to yield toluquinol. With the assistance of the oxidoreductase AOL_s00215g277, the polyprenyl transferase AOL_s00215g276 catalyzes the farnesylation of toluquinol to produce farnesyl hydroquinone, the hybrid precursor for biosynthesis of SECs. Farnesyl hydroquinone undergoes epoxidation and then subsequent dehydrogenation to form farnesyl epoxy-quinone, the first and simplest SEC. The cytochrome P450 monooxygenase AOL_s00215g278 and the FAD-dependent monooxygenase AOL_s00215g279 might be involved in the oxygenation of the phenol moiety, most likely in the epoxy formation. The cytochrome P450 monooxygenases AOL_s00215g274 and AOL_s00215g280 are involved in specific regional ketone reductions at respectively C-4 and C-1 of farnesyl epoxy-quinone PubMed:33823587. The protein is Polyprenyl transferase AOL_s00215g276 of Arthrobotrys oligospora (strain ATCC 24927 / CBS 115.81 / DSM 1491) (Nematode-trapping fungus).